The following is a 119-amino-acid chain: Large ribosomal subunit protein uL24 (119 aa).

The protein belongs to the universal ribosomal protein uL24 family. Part of the 50S ribosomal subunit.

Functionally, one of two assembly initiator proteins, it binds directly to the 5'-end of the 23S rRNA, where it nucleates assembly of the 50S subunit. In terms of biological role, one of the proteins that surrounds the polypeptide exit tunnel on the outside of the subunit. The sequence is that of Large ribosomal subunit protein uL24 from Clavibacter sepedonicus (Clavibacter michiganensis subsp. sepedonicus).